Consider the following 340-residue polypeptide: Fructose-1,6-bisphosphatase, cytosolic (340 aa).

Mg(2+)-binding residues include glutamate 71, glutamate 100, aspartate 121, leucine 123, and aspartate 124. Substrate contacts are provided by residues 124–127 (DGSS), asparagine 215, tyrosine 247, tyrosine 267, and lysine 277. Residue glutamate 283 coordinates Mg(2+).

The protein belongs to the FBPase class 1 family. The cofactor is Mg(2+).

The protein resides in the cytoplasm. The catalysed reaction is beta-D-fructose 1,6-bisphosphate + H2O = beta-D-fructose 6-phosphate + phosphate. The protein is Fructose-1,6-bisphosphatase, cytosolic of Solanum tuberosum (Potato).